Here is a 183-residue protein sequence, read N- to C-terminus: Peptide deformylase (183 aa).

Fe cation is bound by residues cysteine 111 and histidine 154. The active site involves glutamate 155. Residue histidine 158 coordinates Fe cation.

It belongs to the polypeptide deformylase family. Fe(2+) serves as cofactor.

It carries out the reaction N-terminal N-formyl-L-methionyl-[peptide] + H2O = N-terminal L-methionyl-[peptide] + formate. Functionally, removes the formyl group from the N-terminal Met of newly synthesized proteins. Requires at least a dipeptide for an efficient rate of reaction. N-terminal L-methionine is a prerequisite for activity but the enzyme has broad specificity at other positions. The chain is Peptide deformylase from Staphylococcus aureus (strain COL).